The chain runs to 496 residues: Beta-amylase (496 aa).

Substrate is bound by residues aspartate 54, histidine 94, and aspartate 102. Glutamate 187 (proton donor) is an active-site residue. Positions 296, 301, and 343 each coordinate substrate. Residue glutamate 381 is the Proton acceptor of the active site. Substrate is bound by residues 382-383 (NA) and arginine 421.

It belongs to the glycosyl hydrolase 14 family.

It catalyses the reaction Hydrolysis of (1-&gt;4)-alpha-D-glucosidic linkages in polysaccharides so as to remove successive maltose units from the non-reducing ends of the chains.. The chain is Beta-amylase (BMY1) from Trifolium repens (Creeping white clover).